The chain runs to 1435 residues: RNA-directed RNA polymerase VP1 (1435 aa).

The RdRp catalytic domain maps to 604–880 (VLHNVLRPAY…KGVLGAPELF (277 aa)).

Belongs to the reoviridae RNA-directed RNA polymerase family. As to quaternary structure, interacts with VP4.

It carries out the reaction RNA(n) + a ribonucleoside 5'-triphosphate = RNA(n+1) + diphosphate. RNA-directed RNA polymerase involved in transcription and genome replication. Following infection, catalyzes the synthesis of fully conservative plus strands. After core assembly, which consists in recruitment of one capped plus-strand for each genomic segments and polymerase complexes, the polymerase switches mode and catalyzes the synthesis of complementary minus-strands. This is RNA-directed RNA polymerase VP1 from Callospermophilus lateralis (Golden-mantled ground squirrel).